The primary structure comprises 194 residues: Isopentenyl-diphosphate Delta-isomerase (194 aa).

Residues His-27 and His-34 each contribute to the Mn(2+) site. The region spanning Ala-32–Leu-166 is the Nudix hydrolase domain. Cys-69 is an active-site residue. Residue His-71 coordinates Mn(2+). Glu-89 contributes to the Mg(2+) binding site. Mn(2+) contacts are provided by Glu-116 and Glu-118. Glu-118 is an active-site residue.

It belongs to the IPP isomerase type 1 family. Mg(2+) serves as cofactor. Requires Mn(2+) as cofactor.

The protein localises to the cytoplasm. It catalyses the reaction isopentenyl diphosphate = dimethylallyl diphosphate. It participates in isoprenoid biosynthesis; dimethylallyl diphosphate biosynthesis; dimethylallyl diphosphate from isopentenyl diphosphate: step 1/1. In terms of biological role, catalyzes the 1,3-allylic rearrangement of the homoallylic substrate isopentenyl (IPP) to its highly electrophilic allylic isomer, dimethylallyl diphosphate (DMAPP). The protein is Isopentenyl-diphosphate Delta-isomerase of Clavibacter michiganensis subsp. michiganensis (strain NCPPB 382).